The following is a 1064-amino-acid chain: MASESETLNPSARIMTFYPTMEEFRNFSRYIAYIESQGAHRAGLAKVVPPKEWKPRASYDDIDDLVIPAPIQQLVTGQSGLFTQYNIQKKAMTVREFRKIANSDKYCTPRYSEFEELERKYWKNLTFNPPIYGADVNGTLYEKHVDEWNIGRLRTILDLVEKESGITIEGVNTPYLYFGMWKTSFAWHTEDMDLYSINYLHFGEPKSWYSVPPEHGKRLERLAKGFFPGSAQSCEAFLRHKMTLISPLMLKKYGIPFDKVTQEAGEFMITFPYGYHAGFNHGFNCAESTNFATRRWIEYGKQAVLCSCRKDMVKISMDVFVRKFQPERYKLWKAGKDNTVIDHTLPTPEAAEFLKESELPPRAGNEEECPEEDMEGVEDGEEGDLKTSLAKHRIGTKRHRVCLEIPQEVSQSELFPKEDLSSEQYEMTECPAALAPVRPTHSSVRQVEDGLTFPDYSDSTEVKFEELKNVKLEEEDEEEEQAAAALDLSVNPASVGGRLVFSGSKKKSSSSLGSGSSRDSISSDSETSEPLSCRAQGQTGVLTVHSYAKGDGRVTVGEPCTRKKGSAARSFSERELAEVADEYMFSLEENKKSKGRRQPLSKLPRHHPLVLQECVSDDETSEQLTPEEEAEETEAWAKPLSQLWQNRPPNFEAEKEFNETMAQQAPHCAVCMIFQTYHQVEFGGFNQNCGNASDLAPQKQRTKPLIPEMCFTSTGCSTDINLSTPYLEEDGTSILVSCKKCSVRVHASCYGVPPAKASEDWMCSRCSANALEEDCCLCSLRGGALQRANDDRWVHVSCAVAILEARFVNIAERSPVDVSKIPLPRFKLKCIFCKKRRKRTAGCCVQCSHGRCPTAFHVSCAQAAGVMMQPDDWPFVVFITCFRHKIPNLERAKGALQSITAGQKVISKHKNGRFYQCEVVRLTTETFYEVNFDDGSFSDNLYPEDIVSQDCLQFGPPAEGEVVQVRWTDGQVYGAKFVASHPIQMYQVEFEDGSQLVVKRDDVYTLDEELPKRVKSRLSVASDMRFNEIFTEKEVKQEKKRQRVINSRYREDYIEPALYRAIME.

Ala-2 carries the post-translational modification N-acetylalanine. The region spanning 14–56 (IMTFYPTMEEFRNFSRYIAYIESQGAHRAGLAKVVPPKEWKPR) is the JmjN domain. Tyr-132 contributes to the 2-oxoglutarate binding site. The JmjC domain occupies 142 to 308 (EKHVDEWNIG…YGKQAVLCSC (167 aa)). Positions 188 and 190 each coordinate Fe cation. 2-oxoglutarate contacts are provided by Asn-198 and Lys-206. Cys-234 and His-240 together coordinate Zn(2+). Lys-241 provides a ligand contact to 2-oxoglutarate. His-276 contributes to the Fe cation binding site. Residues Cys-306 and Cys-308 each contribute to the Zn(2+) site. The tract at residues 358 to 384 (ELPPRAGNEEECPEEDMEGVEDGEEGD) is disordered. Residues 366 to 382 (EEECPEEDMEGVEDGEE) are compositionally biased toward acidic residues. Lys-471 is covalently cross-linked ((Microbial infection) Glycyl lysine isopeptide (Lys-Gly) (interchain with G-Cter in SUMO)). 2 disordered regions span residues 501–537 (FSGS…RAQG) and 616–641 (SDDE…KPLS). Over residues 509-532 (SSSLGSGSSRDSISSDSETSEPLS) the composition is skewed to low complexity. Ser-523 is subject to Phosphoserine. The segment at 597–638 (RQPLSKLPRHHPLVLQECVSDDETSEQLTPEEEAEETEAWAK) is interaction with NCOR1. Positions 616 to 634 (SDDETSEQLTPEEEAEETE) are enriched in acidic residues. Residues 709–767 (MCFTSTGCSTDINLSTPYLEEDGTSILVSCKKCSVRVHASCYGVPPAKASEDWMCSRCS) form a PHD-type 1 zinc finger. Residues 772-805 (EEDCCLCSLRGGALQRANDDRWVHVSCAVAILEA) form a C2HC pre-PHD-type zinc finger. The PHD-type 2 zinc-finger motif lies at 828–885 (LKCIFCKKRRKRTAGCCVQCSHGRCPTAFHVSCAQAAGVMMQPDDWPFVVFITCFRHK). Tudor domains are found at residues 897-954 (QSIT…CLQF) and 955-1011 (GPPA…EELP).

It belongs to the JHDM3 histone demethylase family. As to quaternary structure, interacts with histone deacetylase proteins HDAC1, HDAC2 and HDAC3. Interacts with RB and NCOR1. Interacts with VRK1. Interacts with FBXO22; this interaction promotes KDM4A ubiquitination. In terms of assembly, (Microbial infection) Interacts with HTLV-1 Tax protein. Fe(2+) is required as a cofactor. Post-translationally, (Microbial infection) SUMOylated by human herpesvirus 8 E3 SUMO-protein ligase K-bZIP/K8 at Lys-471; thereby modulating the chromatin binding and histone demethylase activity of KDM4A. Ubiquitinated by RNF8 and RNF168 following DNA damage, leading to its degradation. Degradation promotes accessibility of H4K20me2 mark for DNA repair protein TP53BP1, which is then recruited. Also ubiquitinated by the SCF(FBXO22) complex; leading to proteasomal degradation. As to expression, ubiquitous.

The protein localises to the nucleus. It catalyses the reaction N(6),N(6),N(6)-trimethyl-L-lysyl(9)-[histone H3] + 2 2-oxoglutarate + 2 O2 = N(6)-methyl-L-lysyl(9)-[histone H3] + 2 formaldehyde + 2 succinate + 2 CO2. The enzyme catalyses N(6),N(6),N(6)-trimethyl-L-lysyl(36)-[histone H3] + 2 2-oxoglutarate + 2 O2 = N(6)-methyl-L-lysyl(36)-[histone H3] + 2 formaldehyde + 2 succinate + 2 CO2. Several specific inhibitors are being developed and tested. In terms of biological role, histone demethylase that specifically demethylates 'Lys-9' and 'Lys-36' residues of histone H3, thereby playing a central role in histone code. Does not demethylate histone H3 'Lys-4', H3 'Lys-27' nor H4 'Lys-20'. Demethylates trimethylated H3 'Lys-9' and H3 'Lys-36' residue, while it has no activity on mono- and dimethylated residues. Demethylation of Lys residue generates formaldehyde and succinate. Participates in transcriptional repression of ASCL2 and E2F-responsive promoters via the recruitment of histone deacetylases and NCOR1, respectively. Functionally, crucial for muscle differentiation, promotes transcriptional activation of the Myog gene by directing the removal of repressive chromatin marks at its promoter. Lacks the N-terminal demethylase domain. This is Lysine-specific demethylase 4A (KDM4A) from Homo sapiens (Human).